We begin with the raw amino-acid sequence, 469 residues long: Glutamine synthetase (469 aa).

Positions 15–96 (EDVKFVDVRF…INFFIHDPIT (82 aa)) constitute a GS beta-grasp domain. In terms of domain architecture, GS catalytic spans 104–469 (PRNVAKKAEA…PHEFEMYFDV (366 aa)). Positions 129 and 131 each coordinate Mg(2+). Glu205 lines the ATP pocket. Glu210 and Glu218 together coordinate Mg(2+). 221–223 (YKF) lines the ATP pocket. L-glutamate is bound by residues 262-263 (NG) and Gly263. His267 lines the Mg(2+) pocket. Residues 269–271 (HQS) and Ser271 contribute to the ATP site. L-glutamate-binding residues include Arg320, Glu326, and Arg338. ATP contacts are provided by Arg338, Arg343, and Lys352. Glu357 is a binding site for Mg(2+). Residue Arg359 participates in L-glutamate binding. The residue at position 397 (Tyr397) is an O-AMP-tyrosine.

Belongs to the glutamine synthetase family. In terms of assembly, oligomer of 12 subunits arranged in the form of two hexagons. Requires Mg(2+) as cofactor.

The protein resides in the cytoplasm. The catalysed reaction is L-glutamate + NH4(+) + ATP = L-glutamine + ADP + phosphate + H(+). The activity of this enzyme could be controlled by adenylation under conditions of abundant glutamine. In terms of biological role, catalyzes the ATP-dependent biosynthesis of glutamine from glutamate and ammonia. Complements L-glutamine auxotrophy of an E.coli glnA mutant. The polypeptide is Glutamine synthetase (Streptomyces coelicolor (strain ATCC BAA-471 / A3(2) / M145)).